A 372-amino-acid chain; its full sequence is DNA-directed RNA polymerase subunit alpha (372 aa).

An alpha N-terminal domain (alpha-NTD) region spans residues 1-268 (MIFDEDSNSV…DQFQPFINFD (268 aa)). Residues 280–372 (KDALPYDSNL…ESLSKQYSEE (93 aa)) form an alpha C-terminal domain (alpha-CTD) region.

The protein belongs to the RNA polymerase alpha chain family. As to quaternary structure, homodimer. The RNAP catalytic core consists of 2 alpha, 1 beta, 1 beta' and 1 omega subunit. When a sigma factor is associated with the core the holoenzyme is formed, which can initiate transcription.

The enzyme catalyses RNA(n) + a ribonucleoside 5'-triphosphate = RNA(n+1) + diphosphate. Its function is as follows. DNA-dependent RNA polymerase catalyzes the transcription of DNA into RNA using the four ribonucleoside triphosphates as substrates. The protein is DNA-directed RNA polymerase subunit alpha of Ehrlichia canis (strain Jake).